Here is a 413-residue protein sequence, read N- to C-terminus: Dolichyl-diphosphooligosaccharide--protein glycosyltransferase 48 kDa subunit (413 aa).

Over 1–383 the chain is Lumenal; that stretch reads GPRSLVLLEN…QYERFIPSAY (383 aa). Residues 384–404 form a helical membrane-spanning segment; sequence PYYAGAFSMMVGLFMFSIVFL. At 405 to 413 the chain is on the cytoplasmic side; the sequence is HMKEKEKSD.

Belongs to the DDOST 48 kDa subunit family. In terms of assembly, component of the oligosaccharyltransferase (OST) complex.

The protein resides in the endoplasmic reticulum. Its subcellular location is the endoplasmic reticulum membrane. Its pathway is protein modification; protein glycosylation. In terms of biological role, subunit of the oligosaccharyl transferase (OST) complex that catalyzes the initial transfer of a defined glycan (Glc(3)Man(9)GlcNAc(2) in eukaryotes) from the lipid carrier dolichol-pyrophosphate to an asparagine residue within an Asn-X-Ser/Thr consensus motif in nascent polypeptide chains, the first step in protein N-glycosylation. N-glycosylation occurs cotranslationally and the complex associates with the Sec61 complex at the channel-forming translocon complex that mediates protein translocation across the endoplasmic reticulum (ER). All subunits are required for a maximal enzyme activity. Required for the assembly of both SST3A- and SS3B-containing OST complexes. This chain is Dolichyl-diphosphooligosaccharide--protein glycosyltransferase 48 kDa subunit, found in Gallus gallus (Chicken).